The sequence spans 231 residues: Orotidine 5'-phosphate decarboxylase (231 aa).

Residues D11, K33, 60–69, T120, R181, Q190, G210, and R211 contribute to the substrate site; that span reads DLKFHDIPNT. K62 serves as the catalytic Proton donor.

The protein belongs to the OMP decarboxylase family. Type 1 subfamily. Homodimer.

It catalyses the reaction orotidine 5'-phosphate + H(+) = UMP + CO2. The protein operates within pyrimidine metabolism; UMP biosynthesis via de novo pathway; UMP from orotate: step 2/2. Catalyzes the decarboxylation of orotidine 5'-monophosphate (OMP) to uridine 5'-monophosphate (UMP). The polypeptide is Orotidine 5'-phosphate decarboxylase (Vibrio atlanticus (strain LGP32) (Vibrio splendidus (strain Mel32))).